The chain runs to 366 residues: 3-dehydroquinate synthase (366 aa).

Residues 107–111 (GVIGD), 131–132 (TS), lysine 144, and lysine 153 each bind NAD(+). Residues glutamate 186, histidine 251, and histidine 268 each coordinate Zn(2+).

This sequence belongs to the sugar phosphate cyclases superfamily. Dehydroquinate synthase family. Requires Co(2+) as cofactor. Zn(2+) is required as a cofactor. It depends on NAD(+) as a cofactor.

It localises to the cytoplasm. It catalyses the reaction 7-phospho-2-dehydro-3-deoxy-D-arabino-heptonate = 3-dehydroquinate + phosphate. Its pathway is metabolic intermediate biosynthesis; chorismate biosynthesis; chorismate from D-erythrose 4-phosphate and phosphoenolpyruvate: step 2/7. Functionally, catalyzes the conversion of 3-deoxy-D-arabino-heptulosonate 7-phosphate (DAHP) to dehydroquinate (DHQ). This chain is 3-dehydroquinate synthase, found in Rippkaea orientalis (strain PCC 8801 / RF-1) (Cyanothece sp. (strain PCC 8801)).